Consider the following 332-residue polypeptide: Oxygen-dependent coproporphyrinogen-III oxidase (332 aa).

Serine 119 is a binding site for coproporphyrinogen III. Residue histidine 133 is the Proton donor of the active site. Coproporphyrinogen III-binding positions include 135-137 and 284-285; these read NVR and GR.

This sequence belongs to the aerobic coproporphyrinogen-III oxidase family. Homodimer.

The enzyme catalyses coproporphyrinogen III + O2 + 2 H(+) = protoporphyrinogen IX + 2 CO2 + 2 H2O. It participates in porphyrin-containing compound metabolism; protoporphyrin-IX biosynthesis; protoporphyrinogen-IX from coproporphyrinogen-III (O2 route): step 1/1. Functionally, involved in the heme biosynthesis. Catalyzes the aerobic oxidative decarboxylation of propionate groups of rings A and B of coproporphyrinogen-III to yield the vinyl groups in protoporphyrinogen-IX. This chain is Oxygen-dependent coproporphyrinogen-III oxidase (cpox), found in Dictyostelium discoideum (Social amoeba).